A 119-amino-acid chain; its full sequence is Large ribosomal subunit protein bL20 (119 aa).

The protein belongs to the bacterial ribosomal protein bL20 family.

Functionally, binds directly to 23S ribosomal RNA and is necessary for the in vitro assembly process of the 50S ribosomal subunit. It is not involved in the protein synthesizing functions of that subunit. The chain is Large ribosomal subunit protein bL20 from Streptococcus equi subsp. equi (strain 4047).